The following is a 351-amino-acid chain: Glycerol-3-phosphate dehydrogenase 1-like protein (351 aa).

Residue G12 to G17 participates in NAD(+) binding. Position 122 (K122) interacts with substrate. NAD(+) is bound at residue A155. The active-site Proton acceptor is the K206. 3 residues coordinate NAD(+): R271, K298, and Q300. R271 to N272 is a substrate binding site.

The protein belongs to the NAD-dependent glycerol-3-phosphate dehydrogenase family. Interacts with SCN5A. As to expression, most highly expressed in heart tissue, with lower levels in the skeletal muscle, kidney, lung and other organs.

Its subcellular location is the cytoplasm. The catalysed reaction is sn-glycerol 3-phosphate + NAD(+) = dihydroxyacetone phosphate + NADH + H(+). Functionally, plays a role in regulating cardiac sodium current; decreased enzymatic activity with resulting increased levels of glycerol 3-phosphate activating the DPD1L-dependent SCN5A phosphorylation pathway, may ultimately lead to decreased sodium current; cardiac sodium current may also be reduced due to alterations of NAD(H) balance induced by DPD1L. The chain is Glycerol-3-phosphate dehydrogenase 1-like protein from Homo sapiens (Human).